A 91-amino-acid chain; its full sequence is UPF0358 protein SAS1047 (91 aa).

Belongs to the UPF0358 family.

The protein is UPF0358 protein SAS1047 of Staphylococcus aureus (strain MSSA476).